The following is a 350-amino-acid chain: ADP-ribose pyrophosphatase, mitochondrial (350 aa).

A mitochondrion-targeting transit peptide spans 1-46 (MAGRSLGKAVATVSLSVALASVTVRSSGCRAIPAPRNPFPSCGFHL). Disordered regions lie at residues 53–77 (GSNG…KVER) and 116–153 (SESS…PAGR). Position 121 is a phosphoserine (S121). Residues 124–135 (FNEKDGHVERKS) are compositionally biased toward basic and acidic residues. Residues 178–334 (WKRDESGNKI…SQFIKLVAEK (157 aa)) enclose the Nudix hydrolase domain. The short motif at 215–237 (GMVDPGEKISATLKREFGEEALN) is the Nudix box element.

The protein belongs to the Nudix hydrolase family. NudF subfamily. As to quaternary structure, monomer. Interacts with GLOD4. Requires Mg(2+) as cofactor. The cofactor is Mn(2+).

The protein resides in the mitochondrion. The enzyme catalyses ADP-D-ribose + H2O = D-ribose 5-phosphate + AMP + 2 H(+). In terms of biological role, hydrolyzes ADP-ribose (ADPR) to AMP and ribose 5'-phosphate. The polypeptide is ADP-ribose pyrophosphatase, mitochondrial (Nudt9) (Rattus norvegicus (Rat)).